The chain runs to 360 residues: DNA integrity scanning protein DisA (360 aa).

The DAC domain maps to 9-147; sequence DDEIIEVLRM…GSRKYILRET (139 aa). ATP contacts are provided by residues Gly-76, Leu-94, and 107 to 111; that span reads TRHKT.

The protein belongs to the DisA family. Homooctamer. Mg(2+) is required as a cofactor.

The enzyme catalyses 2 ATP = 3',3'-c-di-AMP + 2 diphosphate. Functionally, participates in a DNA-damage check-point that is active prior to asymmetric division when DNA is damaged. DisA forms globular foci that rapidly scan along the chromosomes during sporulation, searching for lesions. When a lesion is present, DisA pauses at the lesion site. This triggers a cellular response that culminates in a temporary block in sporulation initiation. Its function is as follows. Also has diadenylate cyclase activity, catalyzing the condensation of 2 ATP molecules into cyclic di-AMP (c-di-AMP). c-di-AMP acts as a signaling molecule that couples DNA integrity with progression of sporulation. The rise in c-di-AMP level generated by DisA while scanning the chromosome, operates as a positive signal that advances sporulation; upon encountering a lesion, the DisA focus arrests at the damaged site and halts c-di-AMP synthesis. In Acetivibrio thermocellus (strain ATCC 27405 / DSM 1237 / JCM 9322 / NBRC 103400 / NCIMB 10682 / NRRL B-4536 / VPI 7372) (Clostridium thermocellum), this protein is DNA integrity scanning protein DisA.